The sequence spans 220 residues: Probable GTP-binding protein EngB (220 aa).

The 179-residue stretch at 41–219 folds into the EngB-type G domain; that stretch reads DRSEVCFAGR…RAEIAALAML (179 aa). Residues 49-56, 76-80, 96-99, 164-167, and 197-200 each bind GTP; these read GRSNVGKS, GRTRE, DLPG, TKVD, and MTSA. Mg(2+)-binding residues include Ser-56 and Thr-78.

The protein belongs to the TRAFAC class TrmE-Era-EngA-EngB-Septin-like GTPase superfamily. EngB GTPase family. It depends on Mg(2+) as a cofactor.

In terms of biological role, necessary for normal cell division and for the maintenance of normal septation. The protein is Probable GTP-binding protein EngB of Hyphomonas neptunium (strain ATCC 15444).